The following is a 122-amino-acid chain: WUSCHEL-related homeobox 7 (122 aa).

The segment at residues 25–89 (AKCGRWNPTV…NHKARERQKC (65 aa)) is a DNA-binding region (homeobox; WUS-type). The segment covering 98-111 (DHRQDTDLSKPRRD) has biased composition (basic and acidic residues). Positions 98–122 (DHRQDTDLSKPRRDNVRRHQLPAKG) are disordered. The segment covering 112-122 (NVRRHQLPAKG) has biased composition (basic residues).

This sequence belongs to the WUS homeobox family.

It is found in the nucleus. Potential transcription factor that plays a central role during developmental processes. The chain is WUSCHEL-related homeobox 7 (WOX7) from Arabidopsis thaliana (Mouse-ear cress).